The following is a 414-amino-acid chain: MKAQTALSFFLILITSLSGSQGIFPLAFFIYVPMNEQIVIGRLDEDIILPSSFERGSEVVIHWKYQDSYKVHSYYKGSDHLESQDPRYANRTSLFYNEIQNGNASLFFRRVSLLDEGIYTCYVGTAIQVITNKVVLKVGVFLTPVMKYEKRNTNSFLICSVLSVYPRPIITWKMDNTPISENNMEETGSLDSFSINSPLNITGSNSSYECTIENSLLKQTWTGRWTMKDGLHKMQSEHVSLSCQPVNDYFSPNQDFKVTWSRMKSGTFSVLAYYLSSSQNTIINESRFSWNKELINQSDFSMNLMDLNLSDSGEYLCNISSDEYTLLTIHTVHVEPSQETASHNKGLWILVPSAILAAFLLIWSVKCCRAQLEARRSRHPADGAQQERCCVPPGERCPSAPDNGEENVPLSGKV.

Residues 1–22 (MKAQTALSFFLILITSLSGSQG) form the signal peptide. The 71-residue stretch at 61–131 (IHWKYQDSYK…YVGTAIQVIT (71 aa)) folds into the Ig-like V-type 1 domain. 2 N-linked (GlcNAc...) asparagine glycosylation sites follow: N90 and N103. The Ig-like C1-type domain occupies 138 to 222 (VGVFLTPVMK…ENSLLKQTWT (85 aa)). 2 disulfide bridges follow: C159–C210 and C243–C317. One can recognise an Ig-like V-type 2 domain in the interval 235–328 (QSEHVSLSCQ…ISSDEYTLLT (94 aa)). A glycan (N-linked (GlcNAc...) asparagine) is linked at N318. A helical membrane pass occupies residues 345 to 365 (KGLWILVPSAILAAFLLIWSV). The tract at residues 383–414 (GAQQERCCVPPGERCPSAPDNGEENVPLSGKV) is disordered.

In terms of assembly, interacts with TMIGD2. In terms of tissue distribution, expressed at high levels in colon, kidney, testis, lung and pancreas, and at lower levels in small intestine, liver and skeletal muscle. In immune cells, highly expressed in B-cells, dendritic cells and macrophages. Not detected in T-cells.

Its subcellular location is the membrane. Functionally, through interaction with TMIGD2, costimulates T-cells in the context of TCR-mediated activation. Enhances T-cell proliferation and cytokine production via an AKT-dependent signaling cascade. This is HERV-H LTR-associating protein 2 (HHLA2) from Homo sapiens (Human).